We begin with the raw amino-acid sequence, 205 residues long: MRKRKLSDRVRCSARLKNRSCSGAHSSSDHEADTYGPKKKAVSSKNTDKKSPKKLENDEKGLMESDEQEFINKTDNTASNESNAGNVNTCPSASPFSDLNEVSRNGLTDDSEDGVGFSHKTSSEPSKVREVYLNGSPFVDEDSNQPMPLGLFFENADLMQDLPPAVPCCASMSRREFRNLHFRAKEEEEDDDDDYADGLVNEGNI.

Basic residues predominate over residues 1–18; the sequence is MRKRKLSDRVRCSARLKN. Disordered regions lie at residues 1-128 and 184-205; these read MRKR…PSKV and AKEE…EGNI. Residues 46–63 show a composition bias toward basic and acidic residues; it reads NTDKKSPKKLENDEKGLM. The span at 71-108 shows a compositional bias: polar residues; the sequence is INKTDNTASNESNAGNVNTCPSASPFSDLNEVSRNGLT. Residues 187–196 show a composition bias toward acidic residues; sequence EEEDDDDDYA.

The protein belongs to the UPF0688 family.

The protein resides in the nucleus. The chain is UPF0688 protein C1orf174 homolog from Xenopus laevis (African clawed frog).